Reading from the N-terminus, the 210-residue chain is ATP-dependent Clp protease proteolytic subunit (210 aa).

S114 (nucleophile) is an active-site residue. H139 is a catalytic residue.

Belongs to the peptidase S14 family. As to quaternary structure, fourteen ClpP subunits assemble into 2 heptameric rings which stack back to back to give a disk-like structure with a central cavity, resembling the structure of eukaryotic proteasomes.

The protein resides in the cytoplasm. The catalysed reaction is Hydrolysis of proteins to small peptides in the presence of ATP and magnesium. alpha-casein is the usual test substrate. In the absence of ATP, only oligopeptides shorter than five residues are hydrolyzed (such as succinyl-Leu-Tyr-|-NHMec, and Leu-Tyr-Leu-|-Tyr-Trp, in which cleavage of the -Tyr-|-Leu- and -Tyr-|-Trp bonds also occurs).. Functionally, cleaves peptides in various proteins in a process that requires ATP hydrolysis. Has a chymotrypsin-like activity. Plays a major role in the degradation of misfolded proteins. The polypeptide is ATP-dependent Clp protease proteolytic subunit (Janthinobacterium sp. (strain Marseille) (Minibacterium massiliensis)).